The chain runs to 130 residues: Cystatin (130 aa).

Residues 1–19 (MEWKIVVPLFAVAFTVANA) form the signal peptide. Positions 67 to 71 (QVVSG) match the Secondary area of contact motif. 2 disulfide bridges follow: Cys-85/Cys-94 and Cys-108/Cys-128.

This sequence belongs to the cystatin family.

It is found in the secreted. Functionally, cysteine proteinase inhibitor. This Oncorhynchus mykiss (Rainbow trout) protein is Cystatin.